The following is a 164-amino-acid chain: Protein SprT (164 aa).

A SprT-like domain is found at 14 to 156 (QQAETFFKRP…LCRRCREILV (143 aa)). Histidine 69 is a binding site for Zn(2+). Glutamate 70 is a catalytic residue. Histidine 73 serves as a coordination point for Zn(2+).

Belongs to the SprT family. Zn(2+) is required as a cofactor.

The protein resides in the cytoplasm. The polypeptide is Protein SprT (Pseudomonas entomophila (strain L48)).